A 230-amino-acid chain; its full sequence is Lecithin retinol acyltransferase (230 aa).

Over 1–194 the chain is Cytoplasmic; that stretch reads MKNPMLEVVS…VKIIIRDQRS (194 aa). One can recognise an LRAT domain in the interval 50–177; it reads VLEVPRTHLT…CRYGTPISPQ (128 aa). Residues H60 and H72 contribute to the active site. The active-site Acyl-thioester intermediate is the C161. A helical membrane pass occupies residues 195-215; it reads VLASAVLGLASIVCTGLVSYT. Over 216 to 230 the chain is Lumenal; it reads TLPAIFIPFFLWMAG.

The protein belongs to the H-rev107 family. Hepatic stellate cells and endothelial cells (at protein level). Found at high levels in testis and liver, followed by retinal pigment epithelium, small intestine, prostate, pancreas and colon. Low expression observed in brain. In fetal tissues, expressed in retinal pigment epithelium and liver, and barely in the brain.

The protein localises to the endoplasmic reticulum membrane. It localises to the rough endoplasmic reticulum. It is found in the endosome. Its subcellular location is the multivesicular body. The protein resides in the cytoplasm. The protein localises to the perinuclear region. It catalyses the reaction all-trans-retinol--[retinol-binding protein] + a 1,2-diacyl-sn-glycero-3-phosphocholine = apo--[retinol-binding protein] + an all-trans-retinyl ester + a 2-acyl-sn-glycero-3-phosphocholine. The catalysed reaction is 1,2-dihexadecanoyl-sn-glycero-3-phosphocholine + all-trans-retinol = all-trans-retinyl hexadecanoate + 2-hexadecanoyl-sn-glycero-3-phosphocholine. The enzyme catalyses 1,2-diheptanoyl-sn-glycero-3-phosphocholine + all-trans-retinol--[retinol-binding protein] = all-trans-retinyl heptanoate + 2-heptanoyl-sn-glycero-3-phosphocholine + apo--[retinol-binding protein]. It carries out the reaction 1,2-dioctanoyl-sn-glycero-3-phosphocholine + all-trans-retinol--[retinol-binding protein] = 2-octanoyl-sn-glycero-3-phosphocholine + all-trans-retinyl octanoate + apo--[retinol-binding protein]. It catalyses the reaction all-trans-retinol--[retinol-binding protein] + 1,2-dihexadecanoyl-sn-glycero-3-phosphocholine = apo--[retinol-binding protein] + all-trans-retinyl hexadecanoate + 2-hexadecanoyl-sn-glycero-3-phosphocholine. The catalysed reaction is 1,2-didodecanoyl-sn-glycero-3-phosphocholine + all-trans-retinol--[retinol-binding protein] = 2-dodecanoyl-sn-glycero-3-phosphocholine + all-trans-retinyl dodecanoate + apo--[retinol-binding protein]. It participates in cofactor metabolism; retinol metabolism. With respect to regulation, inhibited by all-trans-retinyl alpha-bromoacetate and N-boc-L-biocytinyl-11-aminoundecane chloro-methyl ketone (BACMK). Functionally, transfers the acyl group from the sn-1 position of phosphatidylcholine to all-trans retinol, producing all-trans retinyl esters. Retinyl esters are storage forms of vitamin A. LRAT plays a critical role in vision. It provides the all-trans retinyl ester substrates for the isomerohydrolase which processes the esters into 11-cis-retinol in the retinal pigment epithelium; due to a membrane-associated alcohol dehydrogenase, 11 cis-retinol is oxidized and converted into 11-cis-retinaldehyde which is the chromophore for rhodopsin and the cone photopigments. Required for the survival of cone photoreceptors and correct rod photoreceptor cell morphology. The chain is Lecithin retinol acyltransferase from Homo sapiens (Human).